Consider the following 245-residue polypeptide: 1-(5-phosphoribosyl)-5-[(5-phosphoribosylamino)methylideneamino] imidazole-4-carboxamide isomerase (245 aa).

Catalysis depends on Asp-7, which acts as the Proton acceptor. The active-site Proton donor is the Asp-129.

Belongs to the HisA/HisF family.

It localises to the cytoplasm. It catalyses the reaction 1-(5-phospho-beta-D-ribosyl)-5-[(5-phospho-beta-D-ribosylamino)methylideneamino]imidazole-4-carboxamide = 5-[(5-phospho-1-deoxy-D-ribulos-1-ylimino)methylamino]-1-(5-phospho-beta-D-ribosyl)imidazole-4-carboxamide. The protein operates within amino-acid biosynthesis; L-histidine biosynthesis; L-histidine from 5-phospho-alpha-D-ribose 1-diphosphate: step 4/9. The polypeptide is 1-(5-phosphoribosyl)-5-[(5-phosphoribosylamino)methylideneamino] imidazole-4-carboxamide isomerase (Shewanella putrefaciens (strain CN-32 / ATCC BAA-453)).